Consider the following 137-residue polypeptide: MEQTFFIIKPDGVKRGLVGEVLKRIEQRGFTIEKLEFRSQVSEELIDQHYQDLVGQSFYPPIREFMTSGPVLVGVISGPKVIETWRTMMGATRPEEALPGTIRGDFAKAAGENEIIQNVVHGSDSEESAKREIALWF.

ATP-binding residues include Lys9, Phe58, Arg86, Thr92, Arg103, and Asn113. His121 acts as the Pros-phosphohistidine intermediate in catalysis.

The protein belongs to the NDK family. In terms of assembly, homotetramer. Mg(2+) serves as cofactor.

The protein resides in the cytoplasm. The enzyme catalyses a 2'-deoxyribonucleoside 5'-diphosphate + ATP = a 2'-deoxyribonucleoside 5'-triphosphate + ADP. It catalyses the reaction a ribonucleoside 5'-diphosphate + ATP = a ribonucleoside 5'-triphosphate + ADP. In terms of biological role, major role in the synthesis of nucleoside triphosphates other than ATP. The ATP gamma phosphate is transferred to the NDP beta phosphate via a ping-pong mechanism, using a phosphorylated active-site intermediate. The protein is Nucleoside diphosphate kinase of Streptococcus pneumoniae (strain Hungary19A-6).